Reading from the N-terminus, the 783-residue chain is Probable phosphoketolase (783 aa).

It belongs to the XFP family. Thiamine diphosphate is required as a cofactor.

The sequence is that of Probable phosphoketolase from Rhodopseudomonas palustris (strain TIE-1).